Reading from the N-terminus, the 593-residue chain is DNA primase (593 aa).

A CHC2-type zinc finger spans residues 38–62 (CPFHQEKTPSFTVSDSKRFFYCFGC). Residues 250 to 332 (NRSILVEGYF…EKKISFIRLP (83 aa)) enclose the Toprim domain. The Mg(2+) site is built by Glu256, Asp300, and Asp302.

Belongs to the DnaG primase family. In terms of assembly, monomer. Interacts with DnaB. It depends on Zn(2+) as a cofactor. Requires Mg(2+) as cofactor.

The enzyme catalyses ssDNA + n NTP = ssDNA/pppN(pN)n-1 hybrid + (n-1) diphosphate.. Functionally, RNA polymerase that catalyzes the synthesis of short RNA molecules used as primers for DNA polymerase during DNA replication. This chain is DNA primase, found in Rickettsia prowazekii (strain Madrid E).